The primary structure comprises 1406 residues: Receptor-type tyrosine-protein phosphatase eta (1406 aa).

The first 24 residues, 1–24, serve as a signal peptide directing secretion; sequence MRRLPLLPPCPLLLLLLLPAEVRC. Residues 25-1044 lie on the Extracellular side of the membrane; it reads TTACTDDCSL…LPQDPGVIAG (1020 aa). Residues Asn-36, Asn-52, Asn-97, Asn-103, Asn-118, Asn-124, Asn-186, Asn-192, Asn-243, Asn-275, Asn-281, Asn-296, Asn-302, Asn-331, Asn-332, Asn-364, Asn-385, Asn-391, Asn-453, Asn-459, Asn-484, Asn-500, Asn-510, Asn-547, Asn-568, Asn-630, Asn-636, Asn-651, Asn-657, Asn-719, Asn-745, Asn-750, Asn-766, Asn-776, Asn-804, and Asn-828 are each glycosylated (N-linked (GlcNAc...) asparagine). The interval 39–72 is disordered; sequence EEMGTSSNDELSVNATSGNRRLSEDVSLPGRAMS. Polar residues predominate over residues 41 to 58; that stretch reads MGTSSNDELSVNATSGNR. Fibronectin type-III domains lie at 82 to 170, 171 to 259, 260 to 343, 346 to 437, 438 to 523, 524 to 614, 615 to 703, 704 to 793, 794 to 888, and 887 to 979; these read AVLD…TKPS, PVLD…TKPS, PVLD…SLNL, KPSP…TKPS, PVLD…SLYT, KPTP…TKPR, AVLH…TKPS, MVLN…VPSS, VNAF…TDPP, and PPVP…IVDV. Asn-1010 carries N-linked (GlcNAc...) asparagine glycosylation. Residues 1045 to 1065 traverse the membrane as a helical segment; that stretch reads AVIGCLLAILAVVAIGGYIFW. Residues 1066-1406 are Cytoplasmic-facing; the sequence is RRRRKDKRNT…AFGKANGYHA (341 aa). A Tyrosine-protein phosphatase domain is found at 1110 to 1367; that stretch reads FAEEYEELKS…VFLNQCVMDI (258 aa). Residues Asp-1274, 1308 to 1314, and Gln-1352 contribute to the substrate site; that span reads CSAGVGR. Cys-1308 serves as the catalytic Phosphocysteine intermediate.

This sequence belongs to the protein-tyrosine phosphatase family. Receptor class 3 subfamily. In terms of tissue distribution, found on the apical surfaces of retinal Mueller cells, renal tubule cells and intestinal brush border cells.

The protein localises to the cell membrane. It localises to the cell projection. It is found in the ruffle membrane. Its subcellular location is the cell junction. It catalyses the reaction O-phospho-L-tyrosyl-[protein] + H2O = L-tyrosyl-[protein] + phosphate. Tyrosine phosphatase which dephosphorylates or contributes to the dephosphorylation of several substrates. Plays a role in cell adhesion, migration, proliferation and differentiation. Has a role in megakaryocytes and platelet formation. May influence the potential of nonsensory supporting cells to either proliferate or differentiate into hair cells. The chain is Receptor-type tyrosine-protein phosphatase eta (PTPRJ) from Gallus gallus (Chicken).